The sequence spans 1325 residues: MLPVHTEVKPNPLQDANLCSRVFFWWLNPLFKTGHKRRLEEDDMFSVLPEDRSKHLGEELQRYWDKELLRAKKDSRKPSLTKAIIKCYWKSYLILGIFTLIEEGTRVVQPLFLGKIIEYFEKYDPDDSVALHTAYGYAAVLSMCTLILAILHHLYFYHVQCAGMRLRVAMCHMIYRKALRLSNSAMGKTTTGQIVNLLSNDVNKFDQVTIFLHFLWAGPLQAIAVTVLLWVEIGISCLAGLAVLVILLPLQSCIGKLFSSLRSKTAAFTDARIRTMNEVITGMRIIKMYAWEKSFADLIANLRKKEISKILGSSYLRGMNMASFFIANKVILFVTFTSYVLLGNEITASHVFVAMTLYGAVRLTVTLFFPSAIERGSEAIVSIRRIKNFLLLDELPQRKAHVPSDGKAIVHVQDFTAFWDKALDSPTLQGLSFIARPGELLAVVGPVGAGKSSLLSAVLGELPPASGLVSVHGRIAYVSQQPWVFSGTVRSNILFGKKYEKERYEKVIKACALKKDLQLLEDGDLTVIGDRGATLSGGQKARVNLARAVYQDADIYLLDDPLSAVDAEVGKHLFQLCICQALHEKITILVTHQLQYLKAASHILILKDGEMVQKGTYTEFLKSGVDFGSLLKKENEEAEPSTAPGTPTLRKRTFSEASIWSQQSSRPSLKDGAPEGQDAENTQAVQPEESRSEGRIGFKAYKNYFSAGASWFFIIFLVLLNMVGQVFYVLQDWWLSHWANKQGALNNTRNANGNITETLDLSWYLGIYAGLTAVTVLFGIARSLLVFYILVNASQTLHNRMFESILKAPVLFFDRNPIGRILNRFSKDIGHMDDLLPLTFLDFIQTLLLVVSVIAVAAAVIPWILIPLVPLSVVFLVLRRYFLETSRDVKRLESTTRSPVFSHLSSSLQGLWTIRAYKAEERCQELFDAHQDLHSEAWFLFLTTSRWFAVRLDAICAIFVIVVAFGSLVLAKTLNAGQVGLALSYALTLMGMFQWSVRQSAEVENMMISVERVIEYTDLEKEAPWECKKRPPPGWPHEGVIVFDNVNFTYSLDGPLVLKHLTALIKSREKVGIVGRTGAGKSSLISALFRLSEPEGKIWIDKILTTEIGLHDLRKKMSIIPQEPVLFTGTMRKNLDPFNEHTDEELWRALEEVQLKEAIEDLPGKMDTELAESGSNFSVGQRQLVCLARAILKNNRILIIDEATANVDPRTDELIQQKIREKFAQCTVLTIAHRLNTIIDSDKIMVLDSGRLKEYDEPYVLLQNPESLFYKMVQQLGKGEAAALTETAKQVYFRRNYPDITFTSPAVMNTSNGQPSALTIFETAL.

Transmembrane regions (helical) follow at residues 93 to 113 (LILG…PLFL), 136 to 156 (GYAA…HLYF), 205 to 225 (FDQV…AIAV), 227 to 247 (VLLW…LVIL), 322 to 342 (ASFF…YVLL), and 351 to 371 (VFVA…FFPS). Residues 93–377 (LILGIFTLIE…FFPSAIERGS (285 aa)) form the ABC transmembrane type-1 1 domain. The ABC transporter 1 domain maps to 410 to 633 (VHVQDFTAFW…GVDFGSLLKK (224 aa)). 445 to 452 (GPVGAGKS) serves as a coordination point for ATP. Phosphothreonine occurs at positions 646 and 648. A compositionally biased stretch (polar residues) spans 657–667 (ASIWSQQSSRP). The interval 657–690 (ASIWSQQSSRPSLKDGAPEGQDAENTQAVQPEES) is disordered. Residues serine 664 and serine 668 each carry the phosphoserine modification. Transmembrane regions (helical) follow at residues 710 to 730 (SWFF…FYVL), 761 to 781 (LSWY…FGIA), 849 to 869 (LVVS…IPLV), 954 to 974 (AICA…AKTL), and 977 to 997 (GQVG…QWSV). One can recognise an ABC transmembrane type-1 2 domain in the interval 714–1005 (IIFLVLLNMV…SVRQSAEVEN (292 aa)). In terms of domain architecture, ABC transporter 2 spans 1041–1274 (IVFDNVNFTY…PESLFYKMVQ (234 aa)). An ATP-binding site is contributed by 1075–1082 (GRTGAGKS). Residues 1322–1325 (ETAL) carry the PDZ-binding motif.

As to quaternary structure, interacts (via PDZ-binding motif) with SNX27 (via PDZ domain); this interaction accelerates MRP4 internalization. Mg(2+) serves as cofactor. Post-translationally, N-glycosylated; leading to substrate-selective effects on its transport activity.

Its subcellular location is the basolateral cell membrane. The protein resides in the apical cell membrane. It carries out the reaction ATP + H2O + xenobioticSide 1 = ADP + phosphate + xenobioticSide 2.. It catalyses the reaction an S-substituted glutathione(in) + ATP + H2O = an S-substituted glutathione(out) + ADP + phosphate + H(+). The catalysed reaction is 17beta-estradiol 17-O-(beta-D-glucuronate)(in) + ATP + H2O = 17beta-estradiol 17-O-(beta-D-glucuronate)(out) + ADP + phosphate + H(+). The enzyme catalyses dehydroepiandrosterone 3-sulfate(in) + ATP + H2O = dehydroepiandrosterone 3-sulfate(out) + ADP + phosphate + H(+). It carries out the reaction leukotriene C4(in) + ATP + H2O = leukotriene C4(out) + ADP + phosphate + H(+). It catalyses the reaction leukotriene B4(in) + ATP + H2O = leukotriene B4(out) + ADP + phosphate + H(+). The catalysed reaction is urate(in) + ATP + H2O = urate(out) + ADP + phosphate + H(+). The enzyme catalyses 3',5'-cyclic GMP(in) + ATP + H2O = 3',5'-cyclic GMP(out) + ADP + phosphate + H(+). It carries out the reaction 3',5'-cyclic AMP(in) + ATP + H2O = 3',5'-cyclic AMP(out) + ADP + phosphate + H(+). It catalyses the reaction prostaglandin E2(in) + ATP + H2O = prostaglandin E2(out) + ADP + phosphate + H(+). The catalysed reaction is prostaglandin E1(in) + ATP + H2O = prostaglandin E1(out) + ADP + phosphate + H(+). The enzyme catalyses glycodeoxycholate(in) + glutathione(in) + ATP + H2O = glycodeoxycholate(out) + glutathione(out) + ADP + phosphate + H(+). It carries out the reaction cholate(in) + glutathione(in) + ATP + H2O = cholate(out) + glutathione(out) + ADP + phosphate + H(+). It catalyses the reaction glycocholate(in) + glutathione(in) + ATP + H2O = glycocholate(out) + glutathione(out) + ADP + phosphate + H(+). The catalysed reaction is taurocholate(in) + glutathione(in) + ATP + H2O = taurocholate(out) + glutathione(out) + ADP + phosphate + H(+). The enzyme catalyses glycochenodeoxycholate(in) + glutathione(in) + ATP + H2O = glycochenodeoxycholate(out) + glutathione(out) + ADP + phosphate + H(+). It carries out the reaction taurochenodeoxycholate(in) + glutathione(in) + ATP + H2O = taurochenodeoxycholate(out) + glutathione(out) + ADP + phosphate + H(+). It catalyses the reaction glycoursodeoxycholate(in) + glutathione(in) + ATP + H2O = glycoursodeoxycholate(out) + glutathione(out) + ADP + phosphate + H(+). The catalysed reaction is tauroursodeoxycholate(in) + glutathione(in) + ATP + H2O = tauroursodeoxycholate(out) + glutathione(out) + ADP + phosphate + H(+). In terms of biological role, ATP-dependent transporter of the ATP-binding cassette (ABC) family that actively extrudes physiological compounds and xenobiotics from cells. Transports a range of endogenous molecules that have a key role in cellular communication and signaling, including cyclic nucleotides such as cyclic AMP (cAMP) and cyclic GMP (cGMP), bile acids, steroid conjugates, urate, and prostaglandins. Also mediates the ATP-dependent efflux of glutathione conjugates such as leukotriene C4 (LTC4) and leukotriene B4 (LTB4). The presence of GSH is necessary for the ATP-dependent transport of LTB4, whereas GSH is not required for the transport of LTC4. Mediates the cotransport of bile acids with reduced glutathione (GSH). Transports a wide range of drugs and their metabolites, including anticancer, antiviral and antibiotics molecules. Confers resistance to anticancer agents. This Mus musculus (Mouse) protein is ATP-binding cassette sub-family C member 4.